The primary structure comprises 256 residues: Ribosomal RNA small subunit methyltransferase J (256 aa).

S-adenosyl-L-methionine contacts are provided by residues 101–102, 117–118, 153–154, and D176; these read RD, ER, and SS.

The protein belongs to the methyltransferase superfamily. RsmJ family.

The protein resides in the cytoplasm. The enzyme catalyses guanosine(1516) in 16S rRNA + S-adenosyl-L-methionine = N(2)-methylguanosine(1516) in 16S rRNA + S-adenosyl-L-homocysteine + H(+). Its function is as follows. Specifically methylates the guanosine in position 1516 of 16S rRNA. The chain is Ribosomal RNA small subunit methyltransferase J from Photobacterium profundum (strain SS9).